Reading from the N-terminus, the 755-residue chain is 1,4-alpha-glucan branching enzyme GlgB (755 aa).

D431 acts as the Nucleophile in catalysis. E484 serves as the catalytic Proton donor.

It belongs to the glycosyl hydrolase 13 family. GlgB subfamily. As to quaternary structure, monomer.

It carries out the reaction Transfers a segment of a (1-&gt;4)-alpha-D-glucan chain to a primary hydroxy group in a similar glucan chain.. It functions in the pathway glycan biosynthesis; glycogen biosynthesis. In terms of biological role, catalyzes the formation of the alpha-1,6-glucosidic linkages in glycogen by scission of a 1,4-alpha-linked oligosaccharide from growing alpha-1,4-glucan chains and the subsequent attachment of the oligosaccharide to the alpha-1,6 position. This Prochlorococcus marinus (strain NATL2A) protein is 1,4-alpha-glucan branching enzyme GlgB.